The chain runs to 635 residues: DNA mismatch repair protein MutL (635 aa).

Positions 359–399 (GTNKYAQPEAAKSSAAEQAVARERSSARERAAPAYKEDHPY) are disordered. The segment covering 364–377 (AQPEAAKSSAAEQA) has biased composition (low complexity). Residues 378 to 399 (VARERSSARERAAPAYKEDHPY) are compositionally biased toward basic and acidic residues.

The protein belongs to the DNA mismatch repair MutL/HexB family.

Its function is as follows. This protein is involved in the repair of mismatches in DNA. It is required for dam-dependent methyl-directed DNA mismatch repair. May act as a 'molecular matchmaker', a protein that promotes the formation of a stable complex between two or more DNA-binding proteins in an ATP-dependent manner without itself being part of a final effector complex. This chain is DNA mismatch repair protein MutL, found in Yersinia pseudotuberculosis serotype O:1b (strain IP 31758).